Consider the following 872-residue polypeptide: Metabotropic glutamate receptor 2 (872 aa).

A signal peptide spans 1-18; the sequence is MESLLRFLALLLLRGAVA. Residues 19-568 are Extracellular-facing; that stretch reads EGPAKKVLTL…EYIRWGDAWA (550 aa). A disulfide bond links C50 and C92. L-glutamate contacts are provided by R57, R61, S145, A166, and T168. Residues N203 and N286 are each glycosylated (N-linked (GlcNAc...) asparagine). 7 disulfides stabilise this stretch: C234-C518, C355-C362, C400-C407, C500-C519, C504-C522, C525-C537, and C540-C553. L-glutamate is bound at residue D295. N338 is a glycosylation site (N-linked (GlcNAc...) asparagine). K377 contacts L-glutamate. N-linked (GlcNAc...) asparagine glycosylation occurs at N402. N547 carries N-linked (GlcNAc...) asparagine glycosylation. Residues 569 to 589 traverse the membrane as a helical segment; that stretch reads VGPVTIACLGALATLFVLGVF. Residues 590–604 are Cytoplasmic-facing; that stretch reads VRHNATPVVKASGRE. Residues 605 to 625 form a helical membrane-spanning segment; sequence LCYILLGGVFLCYCMTFIFIA. Residues 626 to 633 are Extracellular-facing; that stretch reads KPSTAVCT. C632 and C721 are joined by a disulfide. Residues 634 to 651 traverse the membrane as a helical segment; the sequence is LRRLGLGTAFSVCYSALL. At 652 to 679 the chain is on the cytoplasmic side; sequence TKTNRIARIFGGAREGAQRPRFISPASQ. The important for interaction with HTR2A stretch occupies residues 677 to 685; sequence ASQVAICLA. The chain crosses the membrane as a helical span at residues 680–700; the sequence is VAICLALISGQLLIVAAWLVV. Over 701-726 the chain is Extracellular; that stretch reads EAPGIGKETAPERREVVTLRCNHRDA. A helical transmembrane segment spans residues 727-747; it reads SMLGSLAYNVLLIALCTLYAF. Topologically, residues 748 to 760 are cytoplasmic; that stretch reads KTRKCPENFNEAK. A helical membrane pass occupies residues 761-781; it reads FIGFTMYTTCIIWLAFLPIFY. The Extracellular segment spans residues 782–798; the sequence is VTSSDYRVQTTTMCVSV. Residues 799 to 819 form a helical membrane-spanning segment; it reads SLSGSVVLGCLFAPKLHIILF. Residues 820–872 lie on the Cytoplasmic side of the membrane; that stretch reads QPQKNVVSHRAPTSRFGSAAPRASANLGQGSGSQLVPTVCNGREVVDSTTSSL.

It belongs to the G-protein coupled receptor 3 family. As to quaternary structure, forms heterodimers with GRM3 or GRM4. Interacts with GNAI1. Interacts with TAMALIN. Interacts with HTR2A. As to expression, detected in neurons in brain cortex (at protein level).

It localises to the cell membrane. Its subcellular location is the synapse. It is found in the cell projection. The protein resides in the dendrite. In terms of biological role, dimeric G protein-coupled receptor which is activated by the excitatory neurotransmitter L-glutamate. Plays critical roles in modulating synaptic transmission and neuronal excitability. Upon activation by glutamate, inhibits presynaptic calcium channels, reducing further glutamate release and dampening excitatory signaling. Mechanistically, ligand binding causes a conformation change that triggers signaling via guanine nucleotide-binding proteins (G proteins) and modulates the activity of down-stream effectors, such as adenylate cyclase. May mediate suppression of neurotransmission or may be involved in synaptogenesis or synaptic stabilization. This Mus musculus (Mouse) protein is Metabotropic glutamate receptor 2 (Grm2).